The chain runs to 156 residues: uncharacterized protein (156 aa).

The segment covering 1 to 12 has biased composition (polar residues); that stretch reads MSSRFARSNGNP. The interval 1–27 is disordered; it reads MSSRFARSNGNPNHIRKRNHSPDPIGI. Position 21 is a phosphoserine (Ser-21).

The protein resides in the cytoplasm. Its subcellular location is the nucleus. This is an uncharacterized protein from Saccharomyces cerevisiae (strain ATCC 204508 / S288c) (Baker's yeast).